Reading from the N-terminus, the 257-residue chain is NAD-capped RNA hydrolase NudC (257 aa).

Arg-69 serves as a coordination point for substrate. 2 residues coordinate Zn(2+): Cys-98 and Cys-101. Position 111 (Glu-111) interacts with substrate. Zn(2+) contacts are provided by Cys-116 and Cys-119. Substrate is bound at residue Tyr-124. The 124-residue stretch at 125–248 folds into the Nudix hydrolase domain; the sequence is PQIAPCIIVA…TVARRLIEDT (124 aa). Positions 158, 174, and 178 each coordinate a divalent metal cation. A Nudix box motif is present at residues 159–180; sequence GFVEVGETLEQAAAREIFEESR. 192-199 is a substrate binding site; the sequence is QPWPFPHS. A divalent metal cation is bound at residue Glu-219. Ala-241 provides a ligand contact to substrate.

It belongs to the Nudix hydrolase family. NudC subfamily. As to quaternary structure, homodimer. Requires Mg(2+) as cofactor. Mn(2+) serves as cofactor. Zn(2+) is required as a cofactor.

It carries out the reaction a 5'-end NAD(+)-phospho-ribonucleoside in mRNA + H2O = a 5'-end phospho-adenosine-phospho-ribonucleoside in mRNA + beta-nicotinamide D-ribonucleotide + 2 H(+). The catalysed reaction is NAD(+) + H2O = beta-nicotinamide D-ribonucleotide + AMP + 2 H(+). The enzyme catalyses NADH + H2O = reduced beta-nicotinamide D-ribonucleotide + AMP + 2 H(+). MRNA decapping enzyme that specifically removes the nicotinamide adenine dinucleotide (NAD) cap from a subset of mRNAs by hydrolyzing the diphosphate linkage to produce nicotinamide mononucleotide (NMN) and 5' monophosphate mRNA. The NAD-cap is present at the 5'-end of some mRNAs and stabilizes RNA against 5'-processing. Has preference for mRNAs with a 5'-end purine. Catalyzes the hydrolysis of a broad range of dinucleotide pyrophosphates. This Edwardsiella ictaluri (strain 93-146) protein is NAD-capped RNA hydrolase NudC.